The primary structure comprises 314 residues: Mitotic checkpoint protein BUB3.3 (314 aa).

WD repeat units follow at residues 11–50 (PIED…LSLE), 52–90 (NSQA…VDTI), 92–131 (RHDD…SLVF), 134–173 (DAGG…QSYA), 176–215 (VEVP…SEIK), 229–269 (LDGV…RLNE), and 272–311 (RYSN…QVFI).

The protein belongs to the WD repeat BUB3 family. As to quaternary structure, part of the mitotic checkpoint complex (MCC).

It localises to the nucleus. Its subcellular location is the chromosome. The protein resides in the centromere. The protein localises to the kinetochore. It is found in the cytoplasm. It localises to the cytoskeleton. Its subcellular location is the phragmoplast. The protein resides in the spindle. Has a dual function in spindle-assembly checkpoint signaling and in promoting the establishment of correct kinetochore-microtubule (K-MT) attachments. Promotes the formation of stable end-on bipolar attachments. Necessary for kinetochore localization of BUB1. The BUB1/BUB3 complex plays a role in the inhibition of anaphase-promoting complex or cyclosome (APC/C) when spindle-assembly checkpoint is activated and inhibits the ubiquitin ligase activity of APC/C by phosphorylating its activator CDC20. This Arabidopsis thaliana (Mouse-ear cress) protein is Mitotic checkpoint protein BUB3.3 (BUB3.3).